Consider the following 198-residue polypeptide: FMN-dependent NADH:quinone oxidoreductase (198 aa).

FMN contacts are provided by residues Ser-10, 16 to 18 (SQS), 94 to 97 (MYNF), and 138 to 141 (TRGG).

The protein belongs to the azoreductase type 1 family. Homodimer. It depends on FMN as a cofactor.

The catalysed reaction is 2 a quinone + NADH + H(+) = 2 a 1,4-benzosemiquinone + NAD(+). It carries out the reaction N,N-dimethyl-1,4-phenylenediamine + anthranilate + 2 NAD(+) = 2-(4-dimethylaminophenyl)diazenylbenzoate + 2 NADH + 2 H(+). Quinone reductase that provides resistance to thiol-specific stress caused by electrophilic quinones. Functionally, also exhibits azoreductase activity. Catalyzes the reductive cleavage of the azo bond in aromatic azo compounds to the corresponding amines. The chain is FMN-dependent NADH:quinone oxidoreductase from Shewanella baltica (strain OS223).